Reading from the N-terminus, the 102-residue chain is Nucleoid-associated protein WIGBR5260 (102 aa).

It belongs to the YbaB/EbfC family. As to quaternary structure, homodimer.

It is found in the cytoplasm. It localises to the nucleoid. In terms of biological role, binds to DNA and alters its conformation. May be involved in regulation of gene expression, nucleoid organization and DNA protection. This is Nucleoid-associated protein WIGBR5260 from Wigglesworthia glossinidia brevipalpis.